The primary structure comprises 76 residues: Large ribosomal subunit protein bL31 (76 aa).

It belongs to the bacterial ribosomal protein bL31 family. Type A subfamily. As to quaternary structure, part of the 50S ribosomal subunit.

Functionally, binds the 23S rRNA. This is Large ribosomal subunit protein bL31 from Rhizorhabdus wittichii (strain DSM 6014 / CCUG 31198 / JCM 15750 / NBRC 105917 / EY 4224 / RW1) (Sphingomonas wittichii).